The primary structure comprises 210 residues: Large ribosomal subunit protein uL3 (210 aa).

Positions 125 to 151 are disordered; sequence RHGQSRGPMSHGSRYHRRPGSMGPVAP.

It belongs to the universal ribosomal protein uL3 family. In terms of assembly, part of the 50S ribosomal subunit. Forms a cluster with proteins L14 and L19.

Functionally, one of the primary rRNA binding proteins, it binds directly near the 3'-end of the 23S rRNA, where it nucleates assembly of the 50S subunit. The polypeptide is Large ribosomal subunit protein uL3 (Bacillus cereus (strain ATCC 14579 / DSM 31 / CCUG 7414 / JCM 2152 / NBRC 15305 / NCIMB 9373 / NCTC 2599 / NRRL B-3711)).